Consider the following 201-residue polypeptide: Small ribosomal subunit protein uS2 (201 aa).

Belongs to the universal ribosomal protein uS2 family. As to quaternary structure, part of the 50S ribosomal subunit.

The sequence is that of Small ribosomal subunit protein uS2 from Thermococcus kodakarensis (strain ATCC BAA-918 / JCM 12380 / KOD1) (Pyrococcus kodakaraensis (strain KOD1)).